We begin with the raw amino-acid sequence, 398 residues long: Putative transposase y4qJ (398 aa).

The protein belongs to the transposase 32 family.

The sequence is that of Putative transposase y4qJ from Sinorhizobium fredii (strain NBRC 101917 / NGR234).